A 156-amino-acid polypeptide reads, in one-letter code: Cell division protein SepF (156 aa).

The span at 23–36 shows a compositional bias: basic and acidic residues; that stretch reads SYEKEQTDMKKQQD. Positions 23–50 are disordered; it reads SYEKEQTDMKKQQDPPEQQDVTFPKAQP.

It belongs to the SepF family. Homodimer. Interacts with FtsZ.

It is found in the cytoplasm. Its function is as follows. Cell division protein that is part of the divisome complex and is recruited early to the Z-ring. Probably stimulates Z-ring formation, perhaps through the cross-linking of FtsZ protofilaments. Its function overlaps with FtsA. The chain is Cell division protein SepF from Bacillus thuringiensis (strain Al Hakam).